The following is a 267-amino-acid chain: L-aspartate dehydrogenase (267 aa).

NAD(+) is bound by residues alanine 124 and asparagine 190. Histidine 218 is a catalytic residue.

The protein belongs to the L-aspartate dehydrogenase family.

The catalysed reaction is L-aspartate + NADP(+) + H2O = oxaloacetate + NH4(+) + NADPH + H(+). It carries out the reaction L-aspartate + NAD(+) + H2O = oxaloacetate + NH4(+) + NADH + H(+). The protein operates within cofactor biosynthesis; NAD(+) biosynthesis; iminoaspartate from L-aspartate (dehydrogenase route): step 1/1. Specifically catalyzes the NAD or NADP-dependent dehydrogenation of L-aspartate to iminoaspartate. In Methanococcus maripaludis (strain C6 / ATCC BAA-1332), this protein is L-aspartate dehydrogenase.